Here is a 539-residue protein sequence, read N- to C-terminus: Acid-sensing ion channel 4-A (539 aa).

Over 1 to 68 the chain is Cytoplasmic; the sequence is MPIEFVCKIK…SGRLGVRQTL (68 aa). Residues 69–89 traverse the membrane as a helical segment; sequence WALAFLVSLALFLYQAAKCAI. Topologically, residues 90-432 are extracellular; the sequence is SYLEHPHVTA…EQKKAYDVAG (343 aa). 2 disulfides stabilise this stretch: cysteine 116–cysteine 200 and cysteine 178–cysteine 185. 6 N-linked (GlcNAc...) asparagine glycosylation sites follow: asparagine 136, asparagine 165, asparagine 179, asparagine 184, asparagine 206, and asparagine 241. Cystine bridges form between cysteine 294–cysteine 369, cysteine 313–cysteine 365, cysteine 317–cysteine 363, cysteine 326–cysteine 347, and cysteine 328–cysteine 340. Asparagine 370 carries an N-linked (GlcNAc...) asparagine glycan. Residues 433–453 traverse the membrane as a helical segment; the sequence is LLGDIGGQMGLFIGASVLTIL. Positions 446–448 match the GAS motif; ion selectivity filter motif; it reads GAS. The Cytoplasmic portion of the chain corresponds to 454–539; the sequence is EILDYVYEVI…HHRVSEDFAC (86 aa). Residues 474–494 are disordered; that stretch reads QRDDKKQTQQQQQASTVATVN.

This sequence belongs to the amiloride-sensitive sodium channel (TC 1.A.6) family. ASIC4 subfamily. Homotrimer. Heterotrimer; with other ASIC proteins producing functional channels. As to expression, expressed in central nervous system.

It is found in the cell membrane. It catalyses the reaction Na(+)(in) = Na(+)(out). With respect to regulation, inhibited by the diuretic drug amiloride. Functionally, could form pH-gated trimeric sodium channels and function as a postsynaptic excitatory receptors in the nervous system. The chain is Acid-sensing ion channel 4-A from Danio rerio (Zebrafish).